We begin with the raw amino-acid sequence, 291 residues long: ATP phosphoribosyltransferase (291 aa).

The protein belongs to the ATP phosphoribosyltransferase family. Long subfamily. Requires Mg(2+) as cofactor.

It is found in the cytoplasm. It catalyses the reaction 1-(5-phospho-beta-D-ribosyl)-ATP + diphosphate = 5-phospho-alpha-D-ribose 1-diphosphate + ATP. Its pathway is amino-acid biosynthesis; L-histidine biosynthesis; L-histidine from 5-phospho-alpha-D-ribose 1-diphosphate: step 1/9. Feedback inhibited by histidine. Catalyzes the condensation of ATP and 5-phosphoribose 1-diphosphate to form N'-(5'-phosphoribosyl)-ATP (PR-ATP). Has a crucial role in the pathway because the rate of histidine biosynthesis seems to be controlled primarily by regulation of HisG enzymatic activity. This is ATP phosphoribosyltransferase from Desulfosudis oleivorans (strain DSM 6200 / JCM 39069 / Hxd3) (Desulfococcus oleovorans).